The chain runs to 205 residues: Putative 3-methyladenine DNA glycosylase (205 aa).

It belongs to the DNA glycosylase MPG family.

This chain is Putative 3-methyladenine DNA glycosylase, found in Bacillus cereus (strain ZK / E33L).